Reading from the N-terminus, the 103-residue chain is MLTKITFFERFEPGILSGAKTITLRDEAESHVFAGQILPVSTFEADRWFCDIEVIDIVPVLFSALTEQHAAQENMTLPELRRVIQEIYPGLEQLFQIRFCLVQ.

An ASCH domain is found at 6 to 92; the sequence is TFFERFEPGI…VIQEIYPGLE (87 aa). Residue K20 is the Proton acceptor of the active site. T23 functions as the Nucleophile in the catalytic mechanism. E73 functions as the Proton donor in the catalytic mechanism.

This sequence belongs to the N(4)-acetylcytidine amidohydrolase family.

The enzyme catalyses N(4)-acetylcytidine + H2O = cytidine + acetate + H(+). It catalyses the reaction N(4)-acetyl-2'-deoxycytidine + H2O = 2'-deoxycytidine + acetate + H(+). The catalysed reaction is N(4)-acetylcytosine + H2O = cytosine + acetate + H(+). Catalyzes the hydrolysis of N(4)-acetylcytidine (ac4C). This is N(4)-acetylcytidine amidohydrolase from Shewanella sp. (strain MR-7).